We begin with the raw amino-acid sequence, 151 residues long: MNSKLVQPSYTAKKEDIKREWFLIDAKDYTLGRLASRIAKILQGKHKPTYTPYIDSGDFVVVVNAEKIKLSKDKKENKIYRRYSGYPGGLKEISFEQMQSKHPERIIQLAVKGMMPKTILAKHMMKKLKVYVGPDHPHQAQNPKEIKIENI.

It belongs to the universal ribosomal protein uL13 family. In terms of assembly, part of the 50S ribosomal subunit.

Functionally, this protein is one of the early assembly proteins of the 50S ribosomal subunit, although it is not seen to bind rRNA by itself. It is important during the early stages of 50S assembly. The chain is Large ribosomal subunit protein uL13 from Petrotoga mobilis (strain DSM 10674 / SJ95).